The following is a 93-amino-acid chain: Integration host factor subunit beta (93 aa).

This sequence belongs to the bacterial histone-like protein family. As to quaternary structure, heterodimer of an alpha and a beta chain.

Its function is as follows. This protein is one of the two subunits of integration host factor, a specific DNA-binding protein that functions in genetic recombination as well as in transcriptional and translational control. This chain is Integration host factor subunit beta, found in Aliivibrio fischeri (strain ATCC 700601 / ES114) (Vibrio fischeri).